The sequence spans 121 residues: Small ribosomal subunit protein uS13 (121 aa).

A disordered region spans residues 93–121 (RGLPVRGQNTKNNARTRKGPRRTVANKKK). Over residues 106-121 (ARTRKGPRRTVANKKK) the composition is skewed to basic residues.

The protein belongs to the universal ribosomal protein uS13 family. As to quaternary structure, part of the 30S ribosomal subunit. Forms a loose heterodimer with protein S19. Forms two bridges to the 50S subunit in the 70S ribosome.

Located at the top of the head of the 30S subunit, it contacts several helices of the 16S rRNA. In the 70S ribosome it contacts the 23S rRNA (bridge B1a) and protein L5 of the 50S subunit (bridge B1b), connecting the 2 subunits; these bridges are implicated in subunit movement. Contacts the tRNAs in the A and P-sites. This Bacillus licheniformis (strain ATCC 14580 / DSM 13 / JCM 2505 / CCUG 7422 / NBRC 12200 / NCIMB 9375 / NCTC 10341 / NRRL NRS-1264 / Gibson 46) protein is Small ribosomal subunit protein uS13.